The following is a 553-amino-acid chain: Zinc finger protein Elbow (553 aa).

Disordered regions lie at residues 59–243 (STKQ…MHSP) and 388–407 (GGGGGGSSKSSGSQGGSGGS). 2 stretches are compositionally biased toward low complexity: residues 96-110 (SPVSSHSSSVSTGSV) and 121-134 (SSSSSKPTPTTFKP). 3 stretches are compositionally biased toward polar residues: residues 137–146 (PNNNISNITT), 153–173 (TNLSSNNTSAQQRVKTPKSMT), and 224–236 (TASTTPGRSNSKE). Positions 287 to 480 (SASAAAAAAS…PDAVLSAAAA (194 aa)) are self-association. The interval 287–553 (SASAAAAAAS…YGPRMGSSHP (267 aa)) is interaction with noc. The segment covering 388-406 (GGGGGGSSKSSGSQGGSGG) has biased composition (gly residues). A C2H2-type zinc finger spans residues 437–466 (YVCSWIGSDAAYCGKRFGTSDDLFQHLRTH).

The protein belongs to the Elbow/Noc family. Self-associates. Interacts with gro and noc.

In terms of biological role, may negatively regulate Notch-induced cell proliferation in the eye-head primordium. May act in leg and wing primordia to negatively regulate body-wall specifying genes and thereby promote appendage formation. Required for tracheal development. In Drosophila melanogaster (Fruit fly), this protein is Zinc finger protein Elbow (elB).